The following is a 1578-amino-acid chain: Bromodomain-containing protein DDB_G0270170 (1578 aa).

Over residues 1-12 (MSLEQQDETVVE) the composition is skewed to acidic residues. 4 disordered regions span residues 1–39 (MSLEQQDETVVEEETKTSFETNNSTANNTNNNTDNTYKE), 108–127 (NNNNGDENNKDIHDSSNNTE), 151–285 (HYSD…AKEL), and 319–454 (NENI…TTQT). The span at 18–35 (SFETNNSTANNTNNNTDN) shows a compositional bias: low complexity. Over residues 152 to 163 (YSDDESSKEKQD) the composition is skewed to basic and acidic residues. Low complexity-rich tracts occupy residues 164 to 185 (NINSNNNNNKNKNEQIINSENI) and 197 to 231 (TTPSDTPPTLTNNTSSTTTTTTTNNTTTAATTTTN). Composition is skewed to polar residues over residues 319 to 332 (NENIFSSSRKSTTK) and 340 to 351 (TASTTNTPIITA). The segment covering 352–383 (QQNTTPLSPTQTTTTTTTPTTTTAQQNTPAQT) has biased composition (low complexity). Polar residues predominate over residues 384-395 (ESKPPTTISINI). Composition is skewed to low complexity over residues 396-407 (KGSKSPKTTGGK) and 417-433 (VVISQPVVPSTPVVATT). Residues 443 to 454 (STANNNSETTQT) show a composition bias toward polar residues. Residues 479–506 (SDSATIQQLQQSISMLEDKIRLISSNNK) adopt a coiled-coil conformation. 2 disordered regions span residues 543–565 (FTKSSTLAPPSSERKYSNLYSDD) and 580–730 (IPIP…RMGK). Composition is skewed to low complexity over residues 604 to 653 (NTST…PPQQ) and 660 to 686 (TQQENTSSTTTTTTTTTTTTNTEDTTT). In terms of domain architecture, Bromo spans 735–841 (VVLTPVFKRC…DVFEKGFPKV (107 aa)). A coiled-coil region spans residues 851-903 (KNVDQEKIEKLSNDLKNVTKELEKFKKDDSNSINNNNNNNNNYNNNNNNNNNN). 4 disordered regions span residues 874-969 (KFKK…KVTT), 1039-1167 (HALP…NNNN), 1184-1452 (SIPE…TDSA), and 1480-1544 (EREE…KGNM). Low complexity-rich tracts occupy residues 881 to 911 (NSINNNNNNNNNYNNNNNNNNNNSSSSSSRS), 918 to 961 (SSGS…SSNN), and 1047 to 1061 (SSTHSSHSSSHDSSS). One can recognise an NET domain in the interval 957–1039 (SSSNNKKYPK…QYKNGEIPQH (83 aa)). A compositionally biased stretch (basic and acidic residues) spans 1064 to 1077 (REIEKLQKQLDRLG). Positions 1092 to 1107 (HSKRISKPISKARGRK) are enriched in basic residues. The segment covering 1112-1167 (SSSNLNNSSNNINNNNNNINNYNNNNNYNNNNNNNLNNNNNNNINSNLNNNLNNNN) has biased composition (low complexity). The stretch at 1113-1150 (SSNLNNSSNNINNNNNNINNYNNNNNYNNNNNNNLNNN) forms a coiled coil. Residues 1192 to 1204 (TDISESSDSESDS) show a composition bias toward acidic residues. Low complexity-rich tracts occupy residues 1205–1218 (ESGSSDSSSSYSDS) and 1231–1334 (YNNS…SLTN). Residues 1280-1308 (NSNNNNSNNNNNNVNNNNNNHNNNNHNNN) adopt a coiled-coil conformation. Residues 1356–1369 (SVASWSFDPTNNKE) are compositionally biased toward polar residues. Low complexity predominate over residues 1370–1386 (SSSSSSTSSTSSTSNTT). Residues 1387–1399 (LTPIIQQSSLTHA) show a composition bias toward polar residues. 2 stretches are compositionally biased toward low complexity: residues 1400–1424 (SSPISSSTFVSFSSSSSTPPTNNLS) and 1432–1451 (NSPSINSPSSPSANNNNTDS). Positions 1462 to 1544 (TLKQKEKERV…EKLNNSKGNM (83 aa)) form a coiled coil. The span at 1480–1538 (EREEKEEELKKEEEKKRIEMEEIKRLAKEKEEREAEETRKQIESERAAAREAREKEKLN) shows a compositional bias: basic and acidic residues.

This is Bromodomain-containing protein DDB_G0270170 from Dictyostelium discoideum (Social amoeba).